Consider the following 229-residue polypeptide: MKRKNIALIPAAGIGARFGADKPKQYVEIGSKTVLEHTIGIFERHEAVDLTVVVVSPEDTFADKVQTAFPQVRVWKNGGQTRAETVRNGVAKLLEIGLASADDNILVHDAARCCLPSEALTRLIEQAGNAAEGGILAISIADTLKRAEGGQISATVERTSLWQAQTPQLFRAGLLHRALAAENLDGITDEASAVEKLGIRPLLVQGDARNLKLTQPQDAYIVRLLLNAV.

It belongs to the IspD/TarI cytidylyltransferase family. IspD subfamily.

It carries out the reaction 2-C-methyl-D-erythritol 4-phosphate + CTP + H(+) = 4-CDP-2-C-methyl-D-erythritol + diphosphate. It participates in isoprenoid biosynthesis; isopentenyl diphosphate biosynthesis via DXP pathway; isopentenyl diphosphate from 1-deoxy-D-xylulose 5-phosphate: step 2/6. Its function is as follows. Catalyzes the formation of 4-diphosphocytidyl-2-C-methyl-D-erythritol from CTP and 2-C-methyl-D-erythritol 4-phosphate (MEP). The protein is 2-C-methyl-D-erythritol 4-phosphate cytidylyltransferase of Neisseria meningitidis serogroup C (strain 053442).